A 513-amino-acid polypeptide reads, in one-letter code: Tyrosine-protein phosphatase non-receptor type substrate 1 (513 aa).

The first 31 residues, 1–31, serve as a signal peptide directing secretion; that stretch reads MEPAGPAPGRLGPLLLCLLLSASCFCTGATG. The Ig-like V-type domain occupies 32 to 137; the sequence is KELKVTQPEK…SSEPDTEIQS (106 aa). Residues 32–373 lie on the Extracellular side of the membrane; that stretch reads KELKVTQPEK…PDNNATHNWN (342 aa). N-linked (GlcNAc...) asparagine glycosylation is found at N54, N92, N168, N180, N205, N209, N246, N271, N293, N302, N312, N320, N345, and N367. C55 and C121 are disulfide-bonded. Ig-like C1-type domains follow at residues 149–248 and 255–343; these read PSPP…ANLS and PTVK…PAIT. An intrachain disulfide couples C171 to C229. An intrachain disulfide couples C274 to C332. A helical membrane pass occupies residues 374–394; sequence VFIGVGVACALLVVLLMAALY. Residues 395-511 are Cytoplasmic-facing; it reads LLRIKQKKAK…FSEYASVQVQ (117 aa). Residue Y440 is modified to Phosphotyrosine; by Tyr-kinases. The SH2-binding motif lies at 440–443; that stretch reads YADL. Positions 444-513 are disordered; sequence NLPKEKKPAP…EYASVQVQRK (70 aa). An SH3-binding motif is present at residues 450 to 455; that stretch reads KPAPRA. A phosphotyrosine; by Tyr-kinases mark is found at Y464, Y481, and Y505. Short sequence motifs (SH2-binding) lie at residues 464–467, 481–484, and 505–508; these read YASI, YADL, and YASV. Residues 504–513 show a composition bias toward polar residues; that stretch reads EYASVQVQRK.

In terms of assembly, binds PTPN11 when tyrosine-phosphorylated, except in macrophages, where it primarily binds PTPN6. Binds GRB2 vitro. Binds FGR. Binds JAK2 irrespective of its phosphorylation status and forms a stable complex. Binds SCAP1 and/or SCAP2. The resulting complex recruits FYB1. Binds PTK2B. Interacts with TRIM2. N-glycosylated. Post-translationally, phosphorylated on tyrosine residues. In terms of tissue distribution, highly expressed in cerebral cortex, brain, spinal cord, cerebellum and spleen, and at much lower levels in kidney, thymus, heart, lung and liver. Within the cerebellum, highly expressed throughout the molecular layer, and in synaptic glomeruli in the granule cell layer. Detected in neurons of the hippocampus and dentate gyrus, and in olfactory bulb. Not detected in Purkinje cells. Highly expressed in the plexiform layers, optic fiber layer and the outer segments of the photoreceptor layer in the retina. Highly expressed in macrophages. Isoform 3 is detected at very low levels in all tissues tested.

It is found in the membrane. In terms of biological role, immunoglobulin-like cell surface receptor for CD47. Acts as a docking protein and induces translocation of PTPN6, PTPN11 and other binding partners from the cytosol to the plasma membrane. Supports adhesion of cerebellar neurons, neurite outgrowth and glial cell attachment. May play a key role in intracellular signaling during synaptogenesis and in synaptic function. Involved in the negative regulation of receptor tyrosine kinase-coupled cellular responses induced by cell adhesion, growth factors or insulin. Mediates negative regulation of phagocytosis, mast cell activation and dendritic cell activation. CD47 binding prevents maturation of immature dendritic cells and inhibits cytokine production by mature dendritic cells. Plays a role in antiviral immunity and limits new world arenavirus infection by decreasing virus internalization. Receptor for THBS1. Interaction with THBS1 stimulates phosphorylation of SIRPA. In response to THBS1, involved in ROS signaling in non-phagocytic cells, stimulating NADPH oxidase-derived ROS production. The chain is Tyrosine-protein phosphatase non-receptor type substrate 1 (Sirpa) from Mus musculus (Mouse).